The sequence spans 560 residues: Leucine-rich repeat and IQ domain-containing protein 4 (560 aa).

Residues 1 to 20 are disordered; it reads MSKDIKSVEHSPKIHQRNDP. LRR repeat units lie at residues 23-47, 48-70, 72-95, 97-116, 117-140, 141-164, 166-187, 188-210, 212-233, 234-256, 258-281, 283-301, 302-325, 326-348, 350-371, 374-397, 398-422, 424-443, 444-466, and 468-489; these read VNDR…IFTF, TELE…IQRL, NIRV…LLSS, ESLD…VVSF, LHAL…IFKN, LHHL…IVNQ, KLRE…LCVL, YTLE…IGHL, GLQK…LCQC, SQLS…FAEL, KMTE…RWTS, HLLY…SFRC, LVNL…ICAL, KNLE…LGSL, KLKI…VLSL, LEKL…IRKL, QSLK…SMPN, EVLD…ICQA, QALK…LDSL, and NLKV…VCAE. In terms of domain architecture, IQ spans 504–533; sequence RNIMATKIQAWWRGTMVQRGFGKFGELLKP. The segment at 529–560 is disordered; sequence ELLKPQKKGKTSPKDKKGKKDVKGKPGKGKKK. The segment covering 533–560 has biased composition (basic residues); the sequence is PQKKGKTSPKDKKGKKDVKGKPGKGKKK.

The polypeptide is Leucine-rich repeat and IQ domain-containing protein 4 (LRRIQ4) (Homo sapiens (Human)).